A 161-amino-acid polypeptide reads, in one-letter code: Peptidyl-prolyl cis-trans isomerase 10 (161 aa).

In terms of domain architecture, PPIase cyclophilin-type spans Met1–Ile153.

The protein belongs to the cyclophilin-type PPIase family. PPIL3 subfamily.

The enzyme catalyses [protein]-peptidylproline (omega=180) = [protein]-peptidylproline (omega=0). PPIases accelerate the folding of proteins. It catalyzes the cis-trans isomerization of proline imidic peptide bonds in oligopeptides. The protein is Peptidyl-prolyl cis-trans isomerase 10 (cyn-10) of Caenorhabditis elegans.